Reading from the N-terminus, the 252-residue chain is Orotidine 5'-phosphate decarboxylase (252 aa).

Substrate is bound by residues Asp-24, Lys-46, Asp-73 to Thr-82, Thr-137, Arg-199, Gln-208, Gly-228, and Arg-229. Catalysis depends on Lys-75, which acts as the Proton donor.

Belongs to the OMP decarboxylase family. Type 1 subfamily. In terms of assembly, homodimer.

It carries out the reaction orotidine 5'-phosphate + H(+) = UMP + CO2. The protein operates within pyrimidine metabolism; UMP biosynthesis via de novo pathway; UMP from orotate: step 2/2. Catalyzes the decarboxylation of orotidine 5'-monophosphate (OMP) to uridine 5'-monophosphate (UMP). The chain is Orotidine 5'-phosphate decarboxylase from Moorella thermoacetica (strain ATCC 39073 / JCM 9320).